The chain runs to 375 residues: 23S rRNA (uracil(747)-C(5))-methyltransferase RlmC (375 aa).

The [4Fe-4S] cluster site is built by Cys3, Cys11, Cys14, and Cys87. Residues Gln212, Phe241, Glu262, and Asn307 each coordinate S-adenosyl-L-methionine. Catalysis depends on Cys334, which acts as the Nucleophile.

It belongs to the class I-like SAM-binding methyltransferase superfamily. RNA M5U methyltransferase family. RlmC subfamily.

It carries out the reaction uridine(747) in 23S rRNA + S-adenosyl-L-methionine = 5-methyluridine(747) in 23S rRNA + S-adenosyl-L-homocysteine + H(+). Its function is as follows. Catalyzes the formation of 5-methyl-uridine at position 747 (m5U747) in 23S rRNA. The chain is 23S rRNA (uracil(747)-C(5))-methyltransferase RlmC from Enterobacter sp. (strain 638).